A 366-amino-acid polypeptide reads, in one-letter code: Ribosomal RNA large subunit methyltransferase M (366 aa).

Residues Ser188, 221 to 224 (CPGG), Asp240, Asp260, and Asp277 each bind S-adenosyl-L-methionine. Lys306 functions as the Proton acceptor in the catalytic mechanism.

Belongs to the class I-like SAM-binding methyltransferase superfamily. RNA methyltransferase RlmE family. RlmM subfamily. In terms of assembly, monomer.

Its subcellular location is the cytoplasm. It carries out the reaction cytidine(2498) in 23S rRNA + S-adenosyl-L-methionine = 2'-O-methylcytidine(2498) in 23S rRNA + S-adenosyl-L-homocysteine + H(+). In terms of biological role, catalyzes the 2'-O-methylation at nucleotide C2498 in 23S rRNA. The protein is Ribosomal RNA large subunit methyltransferase M of Klebsiella pneumoniae (strain 342).